Consider the following 196-residue polypeptide: UPF0319 protein VV0948 (196 aa).

A signal peptide spans 1 to 19; that stretch reads MKKMMILSALALFSSSLFA.

It belongs to the UPF0319 family.

The protein is UPF0319 protein VV0948 of Vibrio vulnificus (strain YJ016).